Consider the following 213-residue polypeptide: Ras-related protein Rab-39B (213 aa).

7 residues coordinate GTP: Ser-17, Gly-20, Lys-21, Ser-22, Cys-23, Ser-37, and Thr-40. Residue Ser-22 participates in Mg(2+) binding. A switch-I region spans residues 35 to 43 (QVSDPTVGV). Mg(2+) contacts are provided by Thr-40 and Asp-64. Positions 67, 123, 124, 126, 154, and 155 each coordinate GTP. The segment at 67-83 (GQERFRSITRAYYRNSV) is switch-II. A Phosphoserine modification is found at Ser-201. Residues Cys-211 and Cys-213 are each lipidated (S-geranylgeranyl cysteine). Cys-213 carries the post-translational modification Cysteine methyl ester.

It belongs to the small GTPase superfamily. Rab family. As to quaternary structure, interacts (GDP-bound) with C9orf72; C9orf72 in complex with SMCR8 acts as a GEF for RAB39B. Interacts (in GTP-bound form) with PICK1 (via PDZ domain); a PICK1 homodimer may allow simultaneous association of RAB39B and GRIA2 to PICK1 which is involved in GRIA2 trafficking. Interacts with isoform c of RASSF1; the interaction is strong. Interacts with isoform a of RASSF1; the interaction is weak. Interacts with the DLG4/PSD-95. Interacts (GTP-bound) with HOPS complex components VPS39 and VPS41. The cofactor is Mg(2+). As to expression, highly expressed in the brain.

It localises to the cell membrane. Its subcellular location is the cytoplasmic vesicle membrane. The protein localises to the golgi apparatus. It is found in the cytoplasmic vesicle. The protein resides in the autophagosome membrane. It localises to the autolysosome membrane. The catalysed reaction is GTP + H2O = GDP + phosphate + H(+). With respect to regulation, regulated by guanine nucleotide exchange factors (GEFs) including C9orf72-SMCR8 complex, which promote the exchange of bound GDP for free GTP. Regulated by GTPase activating proteins (GAPs) which increase the GTP hydrolysis activity. Inhibited by GDP dissociation inhibitors (GDIs). In terms of biological role, the small GTPases Rab are key regulators of intracellular membrane trafficking, from the formation of transport vesicles to their fusion with membranes. Rabs cycle between an inactive GDP-bound form and an active GTP-bound form that is able to recruit to membranes different sets of downstream effectors directly responsible for vesicle formation, movement, tethering and fusion. RAB39B is involved in autophagy and may function in autophagosome formation. Binds downstream effector PICK1 to ensure selectively GRIA2 exit from the endoplasmic reticulum to the Golgi and to regulate AMPAR composition at the post-synapses and thus synaptic transmission. May regulate the homeostasis of SNCA/alpha-synuclein. The protein is Ras-related protein Rab-39B of Homo sapiens (Human).